The following is a 189-amino-acid chain: MTVRDVDVPIPEQPGAPYPIVTKCCDIVCGFGRGSSELGIPTANVPVDQLPEVVNKLELGVYFGYAKVTPVAHDLEQVEREDGRVVSYNYGSHLEEDNGDLEVLPVVLSVGKNPFYHNDFKTVEIHILHDFKSTFYGAKIKFNILGYVRPELDYTSKEALIEDIKTDIEISKQVLDTEPYRAHMAELLK.

Mg(2+)-binding residues include Thr-42 and Asn-44. The active-site Nucleophile is the Glu-124.

It belongs to the flavokinase family. Zn(2+) serves as cofactor. Requires Mg(2+) as cofactor.

The enzyme catalyses riboflavin + ATP = FMN + ADP + H(+). Its pathway is cofactor biosynthesis; FMN biosynthesis; FMN from riboflavin (ATP route): step 1/1. Its function is as follows. Catalyzes the phosphorylation of riboflavin (vitamin B2) to form flavin mononucleotide (FMN) coenzyme. This is Riboflavin kinase (FMN1) from Candida glabrata (strain ATCC 2001 / BCRC 20586 / JCM 3761 / NBRC 0622 / NRRL Y-65 / CBS 138) (Yeast).